The primary structure comprises 371 residues: Bifunctional enzyme IspD/IspF (371 aa).

A 2-C-methyl-D-erythritol 4-phosphate cytidylyltransferase region spans residues 1 to 210 (MSEISLIMLA…LDLPTPSFEI (210 aa)). The segment at 211–371 (FTGNGFDVHE…NLKYFDWTRL (161 aa)) is 2-C-methyl-D-erythritol 2,4-cyclodiphosphate synthase. A divalent metal cation-binding residues include D217 and H219. 4-CDP-2-C-methyl-D-erythritol 2-phosphate is bound by residues 217-219 (DVH) and 243-244 (HS). H251 contributes to the a divalent metal cation binding site. 4-CDP-2-C-methyl-D-erythritol 2-phosphate is bound by residues 265–267 (DIG), 270–274 (YPDTD), 341–344 (TTTE), F348, and R351.

The protein in the N-terminal section; belongs to the IspD/TarI cytidylyltransferase family. IspD subfamily. This sequence in the C-terminal section; belongs to the IspF family. A divalent metal cation is required as a cofactor.

The enzyme catalyses 2-C-methyl-D-erythritol 4-phosphate + CTP + H(+) = 4-CDP-2-C-methyl-D-erythritol + diphosphate. It catalyses the reaction 4-CDP-2-C-methyl-D-erythritol 2-phosphate = 2-C-methyl-D-erythritol 2,4-cyclic diphosphate + CMP. Its pathway is isoprenoid biosynthesis; isopentenyl diphosphate biosynthesis via DXP pathway; isopentenyl diphosphate from 1-deoxy-D-xylulose 5-phosphate: step 2/6. It functions in the pathway isoprenoid biosynthesis; isopentenyl diphosphate biosynthesis via DXP pathway; isopentenyl diphosphate from 1-deoxy-D-xylulose 5-phosphate: step 4/6. Its function is as follows. Bifunctional enzyme that catalyzes the formation of 4-diphosphocytidyl-2-C-methyl-D-erythritol from CTP and 2-C-methyl-D-erythritol 4-phosphate (MEP) (IspD), and catalyzes the conversion of 4-diphosphocytidyl-2-C-methyl-D-erythritol 2-phosphate (CDP-ME2P) to 2-C-methyl-D-erythritol 2,4-cyclodiphosphate (ME-CPP) with a corresponding release of cytidine 5-monophosphate (CMP) (IspF). In Campylobacter jejuni subsp. jejuni serotype O:6 (strain 81116 / NCTC 11828), this protein is Bifunctional enzyme IspD/IspF.